The chain runs to 613 residues: Leucine-rich repeat receptor-like protein FASCIATED EAR2 (613 aa).

The N-terminal stretch at M1–P28 is a signal peptide. The Extracellular segment spans residues A29–G573. LRR repeat units follow at residues T79–L103, L104–S128, L130–S150, L151–A176, L178–D199, N202–V226, R227–L250, T251–C274, Q276–A297, L298–C322, S324–W346, L347–F370, L372–V394, V435–M459, K460–M483, G484–M507, and T508–G531. N91 carries an N-linked (GlcNAc...) asparagine glycan. The N-linked (GlcNAc...) asparagine glycan is linked to N158. Residue N249 is glycosylated (N-linked (GlcNAc...) asparagine). N393 carries N-linked (GlcNAc...) asparagine glycosylation. N466 is a glycosylation site (N-linked (GlcNAc...) asparagine). N-linked (GlcNAc...) asparagine glycosylation is present at N514. The chain crosses the membrane as a helical span at residues W574–C597. Over S598 to Y613 the chain is Cytoplasmic.

In terms of tissue distribution, expressed in ear primordia, vegetative apex and young leaf tissues. Barely detected in expanded leaf tissues and not expressed in roots.

It localises to the cell membrane. Its function is as follows. Receptor-like protein that regulates shoot meristem proliferation. Based on additive and synergistic phenotypes of double mutants, it is probable that unlike CLV1 and CLV2 in A.thaliana, FAE2 and TD1 do not function exclusively in a single pathway. This chain is Leucine-rich repeat receptor-like protein FASCIATED EAR2 (FEA2), found in Zea mays (Maize).